We begin with the raw amino-acid sequence, 385 residues long: ATP phosphoribosyltransferase regulatory subunit (385 aa).

It belongs to the class-II aminoacyl-tRNA synthetase family. HisZ subfamily. As to quaternary structure, heteromultimer composed of HisG and HisZ subunits.

It localises to the cytoplasm. It participates in amino-acid biosynthesis; L-histidine biosynthesis; L-histidine from 5-phospho-alpha-D-ribose 1-diphosphate: step 1/9. Functionally, required for the first step of histidine biosynthesis. May allow the feedback regulation of ATP phosphoribosyltransferase activity by histidine. The chain is ATP phosphoribosyltransferase regulatory subunit from Bordetella avium (strain 197N).